The following is a 430-amino-acid chain: Sulfide-quinone reductase (430 aa).

Residues 9–13 (GGGVG), 34–36 (SDR), 42–43 (TP), and Thr-105 each bind FAD. Cys-156 functions as the Cysteine persulfide intermediate in the catalytic mechanism. Cystine bridges form between Cys-280–Cys-422 and Cys-419–Cys-430. Residues Val-294 and Gly-314 each coordinate FAD. A quinone is bound at residue Ile-346. The Cysteine persulfide intermediate role is filled by Cys-347. Position 382 (Lys-382) interacts with FAD.

It belongs to the SQRD family. Homotrimer. It depends on FAD as a cofactor.

Its subcellular location is the membrane. The enzyme catalyses n a quinone + n hydrogen sulfide + n H(+) = polysulfur(n-2) + n a quinol. Its function is as follows. Catalyzes the oxidation of hydrogen sulfide, with the help of a quinone. Consecutive reaction cycles lead to the accumulation of a polysulfide product on the active site Cys residues; these products are released when they exceed a critical length, typically as cyclooctasulfur. The chain is Sulfide-quinone reductase from Aquifex aeolicus (strain VF5).